A 393-amino-acid chain; its full sequence is MGYYSLTEVTAVQYAKEHGYFEKKANVVCHEIGDGNLNYVFKLDDGEKSIIIKQALPYAKVVGESWPLSIKRATIESKALQIFAKYVPEYVPVVYSHDEELAVTVIEDLSRLTITRKGLIDGEEYPLLSQHIGHFLANVLFYTSDFGLQSEEKRVLEGTFVNPDLCKITEDLVFTDPFGHYDTNDYEPELQLTIDELWSDKTLKLKVAQYKYKFLTRKEALIHGDLHTGSIFSSPSETKVIDPEFATYGPFGFDIGQLIANLLLNALSREEEQRGVLFFHIEKTWSYFVETFTKLWIGEGVEAYTKEKQWLPIILQNIFTDAVGFAGCELIRRTIGLAHVADLDEITNKETRIQAKKQALSLGKELIKYESKNADIQLFRTLFQQTVSGGIKA.

Residues Asn-38, Lys-53, and 107–109 (EDL) contribute to the ATP site. Asp-225 is a substrate binding site. 242-244 (DPE) provides a ligand contact to ATP. Arg-332 is a substrate binding site.

This sequence belongs to the methylthioribose kinase family. In terms of assembly, homodimer.

It catalyses the reaction 5-(methylsulfanyl)-D-ribose + ATP = 5-(methylsulfanyl)-alpha-D-ribose 1-phosphate + ADP + H(+). Its pathway is amino-acid biosynthesis; L-methionine biosynthesis via salvage pathway; S-methyl-5-thio-alpha-D-ribose 1-phosphate from S-methyl-5'-thioadenosine (hydrolase route): step 2/2. Catalyzes the phosphorylation of methylthioribose into methylthioribose-1-phosphate. The polypeptide is Methylthioribose kinase (Bacillus cereus (strain AH820)).